The following is a 323-amino-acid chain: 1D-myo-inositol 2-acetamido-2-deoxy-alpha-D-glucopyranoside deacetylase (323 aa).

Residues histidine 28, aspartate 31, and histidine 163 each coordinate Zn(2+).

This sequence belongs to the MshB deacetylase family. The cofactor is Zn(2+).

It carries out the reaction 1D-myo-inositol 2-acetamido-2-deoxy-alpha-D-glucopyranoside + H2O = 1D-myo-inositol 2-amino-2-deoxy-alpha-D-glucopyranoside + acetate. Functionally, catalyzes the deacetylation of 1D-myo-inositol 2-acetamido-2-deoxy-alpha-D-glucopyranoside (GlcNAc-Ins) in the mycothiol biosynthesis pathway. This is 1D-myo-inositol 2-acetamido-2-deoxy-alpha-D-glucopyranoside deacetylase from Streptomyces scabiei (strain 87.22).